The following is a 1293-amino-acid chain: Putative DNA-directed RNA polymerase 008R (1293 aa).

Zn(2+) contacts are provided by Cys-61, Cys-64, Cys-71, His-74, Cys-99, Cys-102, and Cys-123. A DNA-binding region spans residues 270–339 (TNRKPMAGIK…PVMVTPFNVS (70 aa)). Positions 354-376 (EMRDGTVHRPSEWRPSHGDHMET) are enriched in basic and acidic residues. Residues 354–390 (EMRDGTVHRPSEWRPSHGDHMETADGSPLGRVTRPSY) are disordered. Mg(2+)-binding residues include Asp-474, Asp-476, and Asp-478. The alpha-amanitin binding stretch occupies residues 724-734 (GQQYVGGSRPG). The interval 776–788 (PREVFFHAKSGRE) is bridging helix.

This sequence belongs to the RNA polymerase beta' chain family.

It catalyses the reaction RNA(n) + a ribonucleoside 5'-triphosphate = RNA(n+1) + diphosphate. Functionally, component of the DNA-dependent RNA polymerase that catalyzes the transcription of DNA into RNA using the four ribonucleoside triphosphates as substrates. Largest and catalytic component of RNA polymerase II which synthesizes mRNA precursors and many functional non-coding RNAs. Forms the polymerase active center together with the second largest subunit. The protein is Putative DNA-directed RNA polymerase 008R of Frog virus 3 (isolate Goorha) (FV-3).